The chain runs to 269 residues: Aminodeoxychorismate lyase (269 aa).

Lys-140 bears the N6-(pyridoxal phosphate)lysine mark.

It belongs to the class-IV pyridoxal-phosphate-dependent aminotransferase family. As to quaternary structure, homodimer. It depends on pyridoxal 5'-phosphate as a cofactor.

It carries out the reaction 4-amino-4-deoxychorismate = 4-aminobenzoate + pyruvate + H(+). Its pathway is cofactor biosynthesis; tetrahydrofolate biosynthesis; 4-aminobenzoate from chorismate: step 2/2. Functionally, involved in the biosynthesis of p-aminobenzoate (PABA), a precursor of tetrahydrofolate. Converts 4-amino-4-deoxychorismate into 4-aminobenzoate (PABA) and pyruvate. This chain is Aminodeoxychorismate lyase (pabC), found in Escherichia coli (strain K12).